A 335-amino-acid polypeptide reads, in one-letter code: MGKLDVIQAKGTERLKRGFAKMVKGGVIMDVTNAEQARIAEEAGAVSVMALHRVPADIRKAGGVARMAPIEKIQEIMDAVTIPVMAKVRIGHVAEAKILEALGVDMIDESEVLTPSDPFFHIDKREFTVPFVCGARNLGEAVRRIWEGAAMIRTKGEAGTGNIVEAVRHVRLVAEGIRQIQAMTDDQVYAVAEKFAEPYLRLSLNVKEIAGLPQRVLDNEPIYGHYTYREIVDGLYKILLEIKKLGRLPVVNFAAGGVATPADAALMMQMGMDGVFVGSGIFKSSNPPKMAKAIVEAVNHWDEPDVLVEISKEIGEPMRGQDIEELEVRLEERGV.

Position 30 (Asp30) interacts with D-ribose 5-phosphate. Lys87 acts as the Schiff-base intermediate with D-ribose 5-phosphate in catalysis. Residue Gly159 participates in D-ribose 5-phosphate binding. Position 171 (Arg171) interacts with D-glyceraldehyde 3-phosphate. Residues Gly257 and Gly278–Ser279 each bind D-ribose 5-phosphate.

The protein belongs to the PdxS/SNZ family. In terms of assembly, in the presence of PdxT, forms a dodecamer of heterodimers.

It carries out the reaction aldehydo-D-ribose 5-phosphate + D-glyceraldehyde 3-phosphate + L-glutamine = pyridoxal 5'-phosphate + L-glutamate + phosphate + 3 H2O + H(+). It functions in the pathway cofactor biosynthesis; pyridoxal 5'-phosphate biosynthesis. Functionally, catalyzes the formation of pyridoxal 5'-phosphate from ribose 5-phosphate (RBP), glyceraldehyde 3-phosphate (G3P) and ammonia. The ammonia is provided by the PdxT subunit. Can also use ribulose 5-phosphate and dihydroxyacetone phosphate as substrates, resulting from enzyme-catalyzed isomerization of RBP and G3P, respectively. This chain is Pyridoxal 5'-phosphate synthase subunit PdxS, found in Thermococcus kodakarensis (strain ATCC BAA-918 / JCM 12380 / KOD1) (Pyrococcus kodakaraensis (strain KOD1)).